We begin with the raw amino-acid sequence, 261 residues long: Phosphatidylglycerol--prolipoprotein diacylglyceryl transferase (261 aa).

Helical transmembrane passes span 17–37, 60–80, 92–112, and 121–141; these read FGIHWYGLMYLIGFLAFLWLG, ALFYGALGVILGGRLGYALFY, ILFLWQGGMSFHGGFLGVMVA, and GLTFFGIMDFVAPLVPVGLGA. An a 1,2-diacyl-sn-glycero-3-phospho-(1'-sn-glycerol)-binding site is contributed by R143. The next 3 membrane-spanning stretches (helical) occupy residues 175–195, 203–223, and 237–257; these read PSQLYEFLLEGVALFILLWWY, GSVSALFLIGYGSFRFLVEFT, and LSMGQWLSLPMVIAGVWLLIV.

The protein belongs to the Lgt family.

It is found in the cell inner membrane. The enzyme catalyses L-cysteinyl-[prolipoprotein] + a 1,2-diacyl-sn-glycero-3-phospho-(1'-sn-glycerol) = an S-1,2-diacyl-sn-glyceryl-L-cysteinyl-[prolipoprotein] + sn-glycerol 1-phosphate + H(+). Its pathway is protein modification; lipoprotein biosynthesis (diacylglyceryl transfer). Catalyzes the transfer of the diacylglyceryl group from phosphatidylglycerol to the sulfhydryl group of the N-terminal cysteine of a prolipoprotein, the first step in the formation of mature lipoproteins. This is Phosphatidylglycerol--prolipoprotein diacylglyceryl transferase from Methylobacillus flagellatus (strain ATCC 51484 / DSM 6875 / VKM B-1610 / KT).